Reading from the N-terminus, the 1265-residue chain is Kinesin-related protein 13 (1265 aa).

A Kinesin motor domain is found at Asn23–Ile350. Gly106–Thr113 serves as a coordination point for ATP. Residues Leu331 to Ile459 adopt a coiled-coil conformation. Disordered stretches follow at residues Lys918 to Ile1026, Ser1085 to Leu1119, Leu1127 to Ser1146, Leu1158 to Leu1214, and Phe1245 to Lys1265. Low complexity predominate over residues Ile930 to Ser951. Polar residues-rich tracts occupy residues His960 to Cys980, Leu1003 to Ile1026, and Ser1085 to Leu1097. 2 stretches are compositionally biased toward low complexity: residues Gln1100–Leu1119 and Gln1128–Ser1146. Positions Leu1158–Asp1169 are enriched in acidic residues. Residues Ser1174–Val1195 show a composition bias toward low complexity. The segment covering Thr1250–Lys1265 has biased composition (polar residues).

It belongs to the TRAFAC class myosin-kinesin ATPase superfamily. Kinesin family. BimC subfamily.

It is found in the cytoplasm. It localises to the cytoskeleton. Microtubule-associated force-producing protein that plays a role in organelle transport. Its motor activity is directed toward the microtubule's plus end. Cooperates with dynein to control the spindle elongation rate, but is dispensable for mitosis. The sequence is that of Kinesin-related protein 13 (kif13) from Dictyostelium discoideum (Social amoeba).